The following is a 432-amino-acid chain: Polyamine export protein (432 aa).

The CNNM transmembrane domain occupies 1–201; sequence MIMELFHTIL…AEAGVLKTQE (201 aa). Helical transmembrane passes span 2-22, 61-81, 100-120, and 138-158; these read IMEL…SAVV, FITV…GIGE, WIAP…FILF, and LSVV…VWFF. 2 CBS domains span residues 220–279 and 286–345; these read MTTR…NENV and LLRK…SNEE.

Belongs to the UPF0053 family. PaeA subfamily.

Its subcellular location is the cell inner membrane. Functionally, involved in cadaverine and putrescine tolerance in stationary phase. May facilitate the efflux of both cadaverine and putrescine from the cytoplasm, reducing potentially toxic levels under certain stress conditions. The protein is Polyamine export protein of Haemophilus influenzae (strain ATCC 51907 / DSM 11121 / KW20 / Rd).